We begin with the raw amino-acid sequence, 262 residues long: Phosphatidylserine decarboxylase proenzyme (262 aa).

Catalysis depends on charge relay system; for autoendoproteolytic cleavage activity residues aspartate 86, histidine 142, and serine 226. Serine 226 acts as the Schiff-base intermediate with substrate; via pyruvic acid; for decarboxylase activity in catalysis. Serine 226 bears the Pyruvic acid (Ser); by autocatalysis mark.

It belongs to the phosphatidylserine decarboxylase family. PSD-B subfamily. Prokaryotic type I sub-subfamily. In terms of assembly, heterodimer of a large membrane-associated beta subunit and a small pyruvoyl-containing alpha subunit. Pyruvate serves as cofactor. In terms of processing, is synthesized initially as an inactive proenzyme. Formation of the active enzyme involves a self-maturation process in which the active site pyruvoyl group is generated from an internal serine residue via an autocatalytic post-translational modification. Two non-identical subunits are generated from the proenzyme in this reaction, and the pyruvate is formed at the N-terminus of the alpha chain, which is derived from the carboxyl end of the proenzyme. The autoendoproteolytic cleavage occurs by a canonical serine protease mechanism, in which the side chain hydroxyl group of the serine supplies its oxygen atom to form the C-terminus of the beta chain, while the remainder of the serine residue undergoes an oxidative deamination to produce ammonia and the pyruvoyl prosthetic group on the alpha chain. During this reaction, the Ser that is part of the protease active site of the proenzyme becomes the pyruvoyl prosthetic group, which constitutes an essential element of the active site of the mature decarboxylase.

It localises to the cell membrane. It carries out the reaction a 1,2-diacyl-sn-glycero-3-phospho-L-serine + H(+) = a 1,2-diacyl-sn-glycero-3-phosphoethanolamine + CO2. It functions in the pathway phospholipid metabolism; phosphatidylethanolamine biosynthesis; phosphatidylethanolamine from CDP-diacylglycerol: step 2/2. In terms of biological role, catalyzes the formation of phosphatidylethanolamine (PtdEtn) from phosphatidylserine (PtdSer). In Bacillus cereus (strain AH820), this protein is Phosphatidylserine decarboxylase proenzyme.